A 765-amino-acid polypeptide reads, in one-letter code: Phosphoribosylformylglycinamidine synthase subunit PurL (765 aa).

Positions 1–13 (MTVSPTSAPTQAI) are enriched in polar residues. Positions 1-32 (MTVSPTSAPTQAIDTVERAATTPDEPQPFGEL) are disordered. Residue His65 is part of the active site. The ATP site is built by Tyr68 and Lys112. Glu114 serves as a coordination point for Mg(2+). Residues 115-118 (SHNH) and Arg137 each bind substrate. Residue His116 is the Proton acceptor of the active site. Residue Asp138 participates in Mg(2+) binding. Position 263 (Gln263) interacts with substrate. Asp291 contacts Mg(2+). Residue 335–337 (ESQ) participates in substrate binding. ATP-binding residues include Asn523 and Gly560. A Mg(2+)-binding site is contributed by Asn561. Residue Ser563 participates in substrate binding.

Belongs to the FGAMS family. In terms of assembly, monomer. Part of the FGAM synthase complex composed of 1 PurL, 1 PurQ and 2 PurS subunits.

It localises to the cytoplasm. The catalysed reaction is N(2)-formyl-N(1)-(5-phospho-beta-D-ribosyl)glycinamide + L-glutamine + ATP + H2O = 2-formamido-N(1)-(5-O-phospho-beta-D-ribosyl)acetamidine + L-glutamate + ADP + phosphate + H(+). The protein operates within purine metabolism; IMP biosynthesis via de novo pathway; 5-amino-1-(5-phospho-D-ribosyl)imidazole from N(2)-formyl-N(1)-(5-phospho-D-ribosyl)glycinamide: step 1/2. Its function is as follows. Part of the phosphoribosylformylglycinamidine synthase complex involved in the purines biosynthetic pathway. Catalyzes the ATP-dependent conversion of formylglycinamide ribonucleotide (FGAR) and glutamine to yield formylglycinamidine ribonucleotide (FGAM) and glutamate. The FGAM synthase complex is composed of three subunits. PurQ produces an ammonia molecule by converting glutamine to glutamate. PurL transfers the ammonia molecule to FGAR to form FGAM in an ATP-dependent manner. PurS interacts with PurQ and PurL and is thought to assist in the transfer of the ammonia molecule from PurQ to PurL. This chain is Phosphoribosylformylglycinamidine synthase subunit PurL, found in Mycobacterium avium (strain 104).